Here is a 758-residue protein sequence, read N- to C-terminus: Ribosomal RNA processing protein 1 homolog B (758 aa).

S245 carries the post-translational modification Phosphoserine. Over residues 259-272 (AVSKKKTALGKNHS) the composition is skewed to basic residues. The disordered stretch occupies residues 259–285 (AVSKKKTALGKNHSRKDGLSDERGRDD). A compositionally biased stretch (basic and acidic residues) spans 273 to 285 (RKDGLSDERGRDD). Phosphoserine is present on residues S350, S392, S394, and S395. Positions 381–598 (GSRVFCVEEE…KTASLKKRKK (218 aa)) are disordered. Residues 397–408 (QKRRRKKKKKHH) are compositionally biased toward basic residues. Residues 447–457 (GAEATSSTGEE) show a composition bias toward low complexity. Residues S452 and S458 each carry the phosphoserine modification. Basic residues predominate over residues 469–481 (HNKRKRPRKKSPR). Residues 498–513 (SQSGPSGSHPQGPRGS) are compositionally biased toward low complexity. S513 bears the Phosphoserine mark. Over residues 566 to 575 (QRRRLQKKKA) the composition is skewed to basic residues. S579 carries the phosphoserine modification. At K652 the chain carries N6-acetyllysine. Residues 660–681 (KSSTATHPPGPAVQLNKTPSSS) form a disordered region. Residues S702 and S706 each carry the phosphoserine modification. A disordered region spans residues 707–758 (PTGPSRVAFDPEQKPLHGVLKTPTSSPASSPLVAKKPLTTTPRRRPRAMDFF). Citrulline is present on R712. Phosphothreonine is present on T728. Phosphoserine occurs at positions 732, 735, and 736.

This sequence belongs to the RRP1 family. Interacts with the transcriptional activator E2F1. Interacts with serine/threonine-protein phosphatase PP1 subunits PPP1CB and PPP1CC but not with PPP1CA. Interacts with 60S ribosomal proteins RPL5 and RPL27, ribosomal processing protein RRP1/NNP1 and other nucleolar proteins including NOP2/NOL1 and FBL. Also interacts with nucleolar protein NPM1/B23. Interacts with splicing factor SRSF1 and with LUC7L3/CROP. Interacts with GTPase activator SIPA1. Interacts with CBX5/HP1alpha, H1-10, NCL, PARP1, TRIM28 and YBX3. As to quaternary structure, (Microbial infection) Interacts with influenza A virus nucleoprotein NP and with RNA-directed RNA polymerase subunits PB1 and PB2. Post-translationally, citrullinated by PADI4.

The protein resides in the nucleus. The protein localises to the nucleolus. Its subcellular location is the nucleoplasm. It localises to the chromosome. Functionally, positively regulates DNA damage-induced apoptosis by acting as a transcriptional coactivator of proapoptotic target genes of the transcriptional activator E2F1. Likely to play a role in ribosome biogenesis by targeting serine/threonine protein phosphatase PP1 to the nucleolus. Involved in regulation of mRNA splicing. Inhibits SIPA1 GTPase activity. Involved in regulating expression of extracellular matrix genes. Associates with chromatin and may play a role in modulating chromatin structure. In terms of biological role, (Microbial infection) Following influenza A virus (IAV) infection, promotes viral mRNA transcription by facilitating the binding of IAV RNA-directed RNA polymerase to capped mRNA. The protein is Ribosomal RNA processing protein 1 homolog B (RRP1B) of Homo sapiens (Human).